The following is a 264-amino-acid chain: tRNA pseudouridine synthase A (264 aa).

Catalysis depends on Asp51, which acts as the Nucleophile. Tyr109 is a binding site for substrate.

This sequence belongs to the tRNA pseudouridine synthase TruA family. Homodimer.

It carries out the reaction uridine(38/39/40) in tRNA = pseudouridine(38/39/40) in tRNA. Functionally, formation of pseudouridine at positions 38, 39 and 40 in the anticodon stem and loop of transfer RNAs. This Polaromonas naphthalenivorans (strain CJ2) protein is tRNA pseudouridine synthase A.